The following is a 194-amino-acid chain: dTTP/UTP pyrophosphatase (194 aa).

Residue Asp-68 is the Proton acceptor of the active site.

The protein belongs to the Maf family. YhdE subfamily. The cofactor is a divalent metal cation.

Its subcellular location is the cytoplasm. The catalysed reaction is dTTP + H2O = dTMP + diphosphate + H(+). It carries out the reaction UTP + H2O = UMP + diphosphate + H(+). Its function is as follows. Nucleoside triphosphate pyrophosphatase that hydrolyzes dTTP and UTP. May have a dual role in cell division arrest and in preventing the incorporation of modified nucleotides into cellular nucleic acids. The sequence is that of dTTP/UTP pyrophosphatase from Clostridioides difficile (strain 630) (Peptoclostridium difficile).